Consider the following 127-residue polypeptide: Glycine cleavage system H protein (127 aa).

Residues 22–104 form the Lipoyl-binding domain; sequence EAVIGITQFA…YTDGWMVRVK (83 aa). N6-lipoyllysine is present on Lys63.

It belongs to the GcvH family. In terms of assembly, the glycine cleavage system is composed of four proteins: P, T, L and H. (R)-lipoate is required as a cofactor.

The glycine cleavage system catalyzes the degradation of glycine. The H protein shuttles the methylamine group of glycine from the P protein to the T protein. This chain is Glycine cleavage system H protein, found in Nitratidesulfovibrio vulgaris (strain DSM 19637 / Miyazaki F) (Desulfovibrio vulgaris).